Reading from the N-terminus, the 439-residue chain is uncharacterized protein (439 aa).

An N-terminal signal peptide occupies residues 1–22 (MWVALKRFGFLSGLLALTVLSA). Cys23 carries N-palmitoyl cysteine lipidation. Cys23 is lipidated: S-diacylglycerol cysteine.

The protein belongs to the MG067/MG068/MG395 family.

The protein resides in the cell membrane. This is an uncharacterized protein from Mycoplasma pneumoniae (strain ATCC 29342 / M129 / Subtype 1) (Mycoplasmoides pneumoniae).